Consider the following 308-residue polypeptide: Ribosomal RNA large subunit methyltransferase F (308 aa).

It belongs to the methyltransferase superfamily. METTL16/RlmF family.

Its subcellular location is the cytoplasm. The catalysed reaction is adenosine(1618) in 23S rRNA + S-adenosyl-L-methionine = N(6)-methyladenosine(1618) in 23S rRNA + S-adenosyl-L-homocysteine + H(+). Its function is as follows. Specifically methylates the adenine in position 1618 of 23S rRNA. In Salmonella arizonae (strain ATCC BAA-731 / CDC346-86 / RSK2980), this protein is Ribosomal RNA large subunit methyltransferase F.